The chain runs to 352 residues: Cuticle collagen dpy-17 (352 aa).

The N-terminal stretch at 1–29 (MSVFAGYAACTLGAVSMLLCVSLVPQVYQ) is a signal peptide. Positions 61 to 64 (RVRR) are furin-like endopeptidase recognition region. Disordered regions lie at residues 73–143 (GGYG…GPGD) and 156–352 (GPAG…GYRN). The span at 87–97 (GPHGGFPGGPQ) shows a compositional bias: gly residues. 4 triple-helical region regions span residues 156–182 (GPAGPKGTPGHDGPDGIPGVPGVDGED), 202–264 (GPQG…DVEH), 267–290 (GLPGAKGTPGAPGESGDQGEQGDR), and 294–329 (GIAGPPGERGPQGEKGDDGPNGAAGSPGEEGEPGQD). The region spanning 202 to 259 (GPQGPPGSQGKPGARGMRGARGQAAMPGRDGSPGMPGSLGPIGPPGAAGEEGPTGEPG) is the Collagen-like domain. Low complexity predominate over residues 207–259 (PGSQGKPGARGMRGARGQAAMPGRDGSPGMPGSLGPIGPPGAAGEEGPTGEPG). Over residues 337–352 (QRNTNAAVSGNQGYRN) the composition is skewed to polar residues.

This sequence belongs to the cuticular collagen family. As to quaternary structure, collagen polypeptide chains are complexed within the cuticle by disulfide bonds and other types of covalent cross-links.

It localises to the secreted. Its subcellular location is the extracellular space. In terms of biological role, secreted collagen that forms part of the nematode cuticle, which functions as an exoskeleton and a barrier to protect the worm from its environment. Secretion and subsequent incorporation into the cuticle is likely mediated by bli-4, which probably cleaves at the N-terminal consensus furin cleavage site. In Caenorhabditis elegans, this protein is Cuticle collagen dpy-17.